Consider the following 305-residue polypeptide: MRVDGDTWDITSSVGATALGVAAARATETLRADALIRDPFAQILVDATGKATGWERLVAGDIDWPDPEAGRIYDRMVDYQATRTHFFDEYFLAAAAAGIRQVVILASGLDSRAYRLDWPAGTTVYEIDQPQVLKFKDSALAAHQPTAQRRGVAIDLREDWPAALRAAGFDSAQPTAWLAEGLLPYLPADAQDNLFRDIGVLSAAGSRVAVEGYEGKLVLDESEEEAVRREQVRAAFKTAIDVDVTIENLIYEDENRADPAEWLDAHGWSVTKTDAHDEMARLGRPVAEDVERGTFRGQLIQGELR.

S-adenosyl-L-methionine contacts are provided by residues D128 and 155–156 (DL).

It belongs to the UPF0677 family.

Its function is as follows. Exhibits S-adenosyl-L-methionine-dependent methyltransferase activity. The polypeptide is Putative S-adenosyl-L-methionine-dependent methyltransferase MAB_4607c (Mycobacteroides abscessus (strain ATCC 19977 / DSM 44196 / CCUG 20993 / CIP 104536 / JCM 13569 / NCTC 13031 / TMC 1543 / L948) (Mycobacterium abscessus)).